Reading from the N-terminus, the 156-residue chain is 6,7-dimethyl-8-ribityllumazine synthase (156 aa).

5-amino-6-(D-ribitylamino)uracil contacts are provided by residues Phe23, 57–59, and 81–83; these read AFE and TVI. 86-87 lines the (2S)-2-hydroxy-3-oxobutyl phosphate pocket; it reads ST. His89 serves as the catalytic Proton donor. Phe114 serves as a coordination point for 5-amino-6-(D-ribitylamino)uracil. Position 128 (Arg128) interacts with (2S)-2-hydroxy-3-oxobutyl phosphate.

It belongs to the DMRL synthase family. In terms of assembly, forms an icosahedral capsid composed of 60 subunits, arranged as a dodecamer of pentamers.

The enzyme catalyses (2S)-2-hydroxy-3-oxobutyl phosphate + 5-amino-6-(D-ribitylamino)uracil = 6,7-dimethyl-8-(1-D-ribityl)lumazine + phosphate + 2 H2O + H(+). It functions in the pathway cofactor biosynthesis; riboflavin biosynthesis; riboflavin from 2-hydroxy-3-oxobutyl phosphate and 5-amino-6-(D-ribitylamino)uracil: step 1/2. Its function is as follows. Catalyzes the formation of 6,7-dimethyl-8-ribityllumazine by condensation of 5-amino-6-(D-ribitylamino)uracil with 3,4-dihydroxy-2-butanone 4-phosphate. This is the penultimate step in the biosynthesis of riboflavin. This Shouchella clausii (strain KSM-K16) (Alkalihalobacillus clausii) protein is 6,7-dimethyl-8-ribityllumazine synthase.